A 301-amino-acid chain; its full sequence is UDP-N-acetylenolpyruvoylglucosamine reductase 1 (301 aa).

The FAD-binding PCMH-type domain maps to 29–196; it reads KIGGPADILI…LEAVFQLQAG (168 aa). The active site involves arginine 174. Serine 225 serves as the catalytic Proton donor. Glutamate 295 is an active-site residue.

The protein belongs to the MurB family. FAD is required as a cofactor.

It localises to the cytoplasm. It carries out the reaction UDP-N-acetyl-alpha-D-muramate + NADP(+) = UDP-N-acetyl-3-O-(1-carboxyvinyl)-alpha-D-glucosamine + NADPH + H(+). It functions in the pathway cell wall biogenesis; peptidoglycan biosynthesis. Functionally, cell wall formation. The protein is UDP-N-acetylenolpyruvoylglucosamine reductase 1 (murB1) of Bacillus cereus (strain ATCC 14579 / DSM 31 / CCUG 7414 / JCM 2152 / NBRC 15305 / NCIMB 9373 / NCTC 2599 / NRRL B-3711).